The sequence spans 233 residues: MNMIGTFIKPMHPEGRKFVAIFAAVTFGLFLLTPILGWIGVGLTVWCYYFFRDPERVTPARPGLVISPADGVVSLIEPAVPPAELGLPDVPLTRVSVFMSVFNCHVNRAPVAGEVTAVAYRPGKFFNASLDKASADNERNSLAIRMEDGRDLAVVQIAGLVARRIVCFVKPGAQLGRGERFGLIRFGSRLDVYLPEGVSPQVEIGQTMIAGETVIAELGTGVHTDQNKGELHG.

The active-site Schiff-base intermediate with substrate; via pyruvic acid is S188. Pyruvic acid (Ser); by autocatalysis is present on S188.

The protein belongs to the phosphatidylserine decarboxylase family. PSD-A subfamily. As to quaternary structure, heterodimer of a large membrane-associated beta subunit and a small pyruvoyl-containing alpha subunit. Requires pyruvate as cofactor. In terms of processing, is synthesized initially as an inactive proenzyme. Formation of the active enzyme involves a self-maturation process in which the active site pyruvoyl group is generated from an internal serine residue via an autocatalytic post-translational modification. Two non-identical subunits are generated from the proenzyme in this reaction, and the pyruvate is formed at the N-terminus of the alpha chain, which is derived from the carboxyl end of the proenzyme. The post-translation cleavage follows an unusual pathway, termed non-hydrolytic serinolysis, in which the side chain hydroxyl group of the serine supplies its oxygen atom to form the C-terminus of the beta chain, while the remainder of the serine residue undergoes an oxidative deamination to produce ammonia and the pyruvoyl prosthetic group on the alpha chain.

The protein localises to the cell membrane. The catalysed reaction is a 1,2-diacyl-sn-glycero-3-phospho-L-serine + H(+) = a 1,2-diacyl-sn-glycero-3-phosphoethanolamine + CO2. The protein operates within phospholipid metabolism; phosphatidylethanolamine biosynthesis; phosphatidylethanolamine from CDP-diacylglycerol: step 2/2. In terms of biological role, catalyzes the formation of phosphatidylethanolamine (PtdEtn) from phosphatidylserine (PtdSer). The chain is Phosphatidylserine decarboxylase proenzyme from Ruegeria sp. (strain TM1040) (Silicibacter sp.).